We begin with the raw amino-acid sequence, 492 residues long: Alpha/beta hydrolase ucsC (492 aa).

Residue serine 258 is the Nucleophile of the active site.

The protein belongs to the AB hydrolase superfamily. FUS2 hydrolase family. In terms of assembly, homodimer.

Its pathway is mycotoxin biosynthesis. Its function is as follows. Alpha/beta hydrolase; part of the gene cluster that mediates the biosynthesis of UCS1025A, a member of the pyrrolizidinone family that acts as a strong telomerase inhibitor and displays potent antibacterial and antitumor properties. These compounds share a hemiaminal-containing pyrrolizidinone core fused with a gamma-lactone, giving a furopyrrolizidine that is connected to a decalin fragment. The polyketide synthase module (PKS) of the PKS-NRPS ucsA is responsible for the synthesis of the polyketide backbone via the condensation of an acetyl-CoA starter unit with 6 malonyl-CoA units. The downstream nonribosomal peptide synthetase (NRPS) module then amidates the carboxyl end of the polyketide with a 2S,3S-methylproline derived from L-isoleucine by the 2-oxoglutarate-dependent dioxygenase ucsF which converts L-isoleucine to (4S,5S)-4-methylpyrroline-5-carboxylate that is further converted to 2S,3S-methylproline by the pyrroline-5-carboxylate reductase ucsG. Reductive release of the completed aminoacyl polyketide from the assembly line can form the 3-pyrrolin-2-one structure via an intramolecular Knoevenagel reaction. Because ucsA lacks a designated enoylreductase (ER) domain, the required activity is provided the enoyl reductase ucsL. This keto acyclic precursor is the substrate of the Diels-Alderase ucsH, that catalyzes the Diels-Alder cycloaddition. Oxidation of the 3S-methyl group to a carboxylate by the cytochrome P450 monooxygenase ucsK allows an oxa-Michael cyclization that might involve the reductase/dehydrogenase ucsI and which furnishes the furopyrrolizidine. The oxidase ucsJ likely plays a critical role in stereoselective reduction of the C5-C6 double bond to afford the required R-configured carboxylate group. Further enolization and oxidation at C5 by an unidentified enzyme affords the last intermediate that can undergo oxa-Michael cyclization to yield UCS1025A. The sequence is that of Alpha/beta hydrolase ucsC from Acremonium sp.